Reading from the N-terminus, the 519-residue chain is Probable WRKY transcription factor 33 (519 aa).

2 disordered regions span residues 1 to 34 and 123 to 212; these read MAASFLTMDNSRTRQNMNGSANWSQQSGRTSTSS and SSGV…CTFP. Residues 7 to 34 are compositionally biased toward polar residues; sequence TMDNSRTRQNMNGSANWSQQSGRTSTSS. Residues 130–142 show a composition bias toward low complexity; it reads TTTTTTTTTTTTT. Polar residues predominate over residues 164 to 174; sequence TETRPNNQAVS. Residues 178–188 are compositionally biased toward basic and acidic residues; sequence REQRKGEDGYN. The segment at residues 178–242 is a DNA-binding region (WRKY 1); the sequence is REQRKGEDGY…YKGSHNHPKP (65 aa). Zn(2+) is bound by residues Cys-209, Cys-214, His-237, and His-239. Disordered stretches follow at residues 232–255 and 267–349; these read VYKGSHNHPKPQSTRRSSSSSSTF and NRQA…REPR. Over residues 245-254 the composition is skewed to low complexity; it reads TRRSSSSSST. A compositionally biased stretch (polar residues) spans 269 to 299; the sequence is QASSDQPNSNNSFHQSDSFGMQQEDNTTSDS. The segment covering 323–332 has biased composition (basic and acidic residues); it reads PEAKRWKGDN. Residues 356–421 constitute a DNA-binding region (WRKY 2); it reads SDIDILDDGY…YEGKHNHDVP (66 aa). Residues Cys-387, Cys-392, His-416, and His-418 each contribute to the Zn(2+) site.

This sequence belongs to the WRKY group I family. As to quaternary structure, interacts with MKS1. Interacts with ATG18A. Interacts with SIB1 and SIB2. Interacts with VQ1 and VQ10. In terms of processing, phosphorylated by MPK4. Phosphorylated on serine residues by MPK3 and MPK6 following infection with the necrotrophic fungal pathogen B.cinerea. Highly expressed in roots, leaves and flowers, and at lower levels in stems, siliques and seeds.

Its subcellular location is the nucleus. In terms of biological role, transcription factor. Interacts specifically with the W box (5'-TTGAC[CT]-3'), a frequently occurring elicitor-responsive cis-acting element. Involved in defense responses. Required for resistance to the necrotrophic fungal pathogen B.cinerea. Regulates the antagonistic relationship between defense pathways mediating responses to the bacterial pathogen P. syringae and the necrotrophic pathogen B.cinerea. Required for the phytoalexin camalexin synthesis following infection with B.cinerea. Acts as a positive regulator of the camalexin biosynthetic genes PAD3 (CYP71B15) and CYP71A13 by binding to their promoters. Acts downstream of MPK3 and MPK6 in reprogramming the expression of camalexin biosynthetic genes, which drives the metabolic flow to camalexin production. Functions with WRKY25 as positive regulator of salt stress response and abscisic acid (ABA) signaling. Functions with WRKY25 and WRKY26 as positive regulator of plant thermotolerance by partially participating in ethylene-response signal transduction pathway. The DNA-binding activity of WRKY33 is increased by SIB1 and SIB2. The polypeptide is Probable WRKY transcription factor 33 (WRKY33) (Arabidopsis thaliana (Mouse-ear cress)).